We begin with the raw amino-acid sequence, 690 residues long: Elongation factor G (690 aa).

In terms of domain architecture, tr-type G spans 8–283 (SRCRNIGIMA…AVVDFLPSPS (276 aa)). Residues 17–24 (AHIDAGKT), 81–85 (DTPGH), and 135–138 (NKMD) contribute to the GTP site.

The protein belongs to the TRAFAC class translation factor GTPase superfamily. Classic translation factor GTPase family. EF-G/EF-2 subfamily.

Its subcellular location is the cytoplasm. Functionally, catalyzes the GTP-dependent ribosomal translocation step during translation elongation. During this step, the ribosome changes from the pre-translocational (PRE) to the post-translocational (POST) state as the newly formed A-site-bound peptidyl-tRNA and P-site-bound deacylated tRNA move to the P and E sites, respectively. Catalyzes the coordinated movement of the two tRNA molecules, the mRNA and conformational changes in the ribosome. This is Elongation factor G from Anaplasma marginale (strain St. Maries).